We begin with the raw amino-acid sequence, 107 residues long: L-rhamnose mutarotase (107 aa).

Position 18 (Y18) interacts with substrate. H22 (proton donor) is an active-site residue. Substrate is bound by residues Y41 and 76–77 (WW).

This sequence belongs to the rhamnose mutarotase family. Homodimer.

It localises to the cytoplasm. It catalyses the reaction alpha-L-rhamnose = beta-L-rhamnose. The protein operates within carbohydrate metabolism; L-rhamnose metabolism. Its function is as follows. Involved in the anomeric conversion of L-rhamnose. The sequence is that of L-rhamnose mutarotase from Paraburkholderia xenovorans (strain LB400).